The sequence spans 139 residues: uncharacterized protein (139 aa).

This is an uncharacterized protein from Ostreid herpesvirus 1 (isolate France) (OsHV-1).